A 413-amino-acid polypeptide reads, in one-letter code: Eukaryotic initiation factor 4A-9 (413 aa).

Residues 40-68 (HSFDAMGLKENLLRGIYAYGFEKPSAIQQ) carry the Q motif motif. The Helicase ATP-binding domain occupies 71–241 (IVPFCKGLDV…RKFMNKPVRI (171 aa)). 84–91 (AQSGTGKT) serves as a coordination point for ATP. The DEAD box motif lies at 189 to 192 (DEAD). In terms of domain architecture, Helicase C-terminal spans 252-413 (GIKQFYVNVD…ELPANVADLL (162 aa)).

This sequence belongs to the DEAD box helicase family. eIF4A subfamily. In terms of assembly, eIF4F is a multi-subunit complex, the composition of which varies with external and internal environmental conditions. It is composed of at least EIF4A, EIF4E and EIF4G.

The enzyme catalyses ATP + H2O = ADP + phosphate + H(+). ATP-dependent RNA helicase which is a subunit of the eIF4F complex involved in cap recognition and is required for mRNA binding to ribosome. In the current model of translation initiation, eIF4A unwinds RNA secondary structures in the 5'-UTR of mRNAs which is necessary to allow efficient binding of the small ribosomal subunit, and subsequent scanning for the initiator codon. The protein is Eukaryotic initiation factor 4A-9 of Nicotiana tabacum (Common tobacco).